We begin with the raw amino-acid sequence, 110 residues long: Acylphosphatase (110 aa).

Residues 21-108 enclose the Acylphosphatase-like domain; sequence TRRYLVTGRV…TNLKSFRIEG (88 aa). Residues R36 and N54 contribute to the active site.

This sequence belongs to the acylphosphatase family.

It carries out the reaction an acyl phosphate + H2O = a carboxylate + phosphate + H(+). In Koribacter versatilis (strain Ellin345), this protein is Acylphosphatase (acyP).